A 245-amino-acid polypeptide reads, in one-letter code: Outer dense fiber protein 1 (245 aa).

Phosphoserine is present on residues Ser5 and Ser10. Residues 34 to 38 (RCLCD) form repeat 1. The interval 34–78 (RCLCDLYMHPYCCCDLHPYPYCLCYSKRSRSCGLCDLYYPCCLCD) is 2 X 5 AA repeats of [RC]-C-L-C-D. Ser64 is subject to Phosphoserine. The stretch at 74–78 (CCLCD) is repeat 2. Ser87, Ser108, Ser109, Ser137, Ser153, Ser175, and Ser180 each carry phosphoserine. Positions 195–233 (CNPCNPCSPCSPCGPCGPCGPCGPCGPCGPCDPCNPCYP) are C-X-P repeat region.

As to quaternary structure, interacts (via leucine zipper motif) with TCP11. Interacts with SPAG4. Interacts with KLC3. Interacts with CCDC42. In terms of tissue distribution, testis. Specifically located to the round spermatid layer and to the luminally-oriented cytoplasm of elongated spermatids.

The protein localises to the cell projection. Its subcellular location is the cilium. The protein resides in the flagellum. It is found in the cytoplasm. It localises to the cytoskeleton. The protein localises to the microtubule organizing center. Its subcellular location is the centrosome. In terms of biological role, component of the outer dense fibers (ODF) of spermatozoa. ODF are filamentous structures located on the outside of the axoneme in the midpiece and principal piece of the mammalian sperm tail and may help to maintain the passive elastic structures and elastic recoil of the sperm tail. The chain is Outer dense fiber protein 1 (Odf1) from Rattus norvegicus (Rat).